The primary structure comprises 64 residues: Phi-buthitoxin-Hj1a (64 aa).

Residues 1 to 18 (MNSFVVVLLLFIAILCNA) form the signal peptide. Cystine bridges form between Cys29–Cys43, Cys36–Cys49, and Cys42–Cys58.

Belongs to the scorpion calcin-like family. Expressed by the venom gland.

Its subcellular location is the secreted. In terms of biological role, may increase intracellular calcium release through the activation of nuclear inositol 1,4,5-trisphosphate receptors (ITPR) of cardiomyocytes, thereby causing an increase in the contraction frequency of these cells. The polypeptide is Phi-buthitoxin-Hj1a (Hottentotta judaicus (Black scorpion)).